A 456-amino-acid polypeptide reads, in one-letter code: Chromosomal replication initiator protein DnaA (456 aa).

The segment at 1–73 (MEIYLDNLWD…ADVVHDILGY (73 aa)) is domain I, interacts with DnaA modulators. A domain II region spans residues 73-117 (YPVEIYLTTFLVEDSRKNDSGLIWSEHKSVNILGENLSIPKPLPA). The interval 118–334 (NLNAKYMFSR…GALTRVVTYI (217 aa)) is domain III, AAA+ region. The ATP site is built by G162, G164, K165, and T166. A domain IV, binds dsDNA region spans residues 335 to 456 (SISGLPMTVE…SDRINFSSRH (122 aa)).

This sequence belongs to the DnaA family. In terms of assembly, oligomerizes as a right-handed, spiral filament on DNA at oriC.

It localises to the cytoplasm. Functionally, plays an essential role in the initiation and regulation of chromosomal replication. ATP-DnaA binds to the origin of replication (oriC) to initiate formation of the DNA replication initiation complex once per cell cycle. Binds the DnaA box (a 9 base pair repeat at the origin) and separates the double-stranded (ds)DNA. Forms a right-handed helical filament on oriC DNA; dsDNA binds to the exterior of the filament while single-stranded (ss)DNA is stabiized in the filament's interior. The ATP-DnaA-oriC complex binds and stabilizes one strand of the AT-rich DNA unwinding element (DUE), permitting loading of DNA polymerase. After initiation quickly degrades to an ADP-DnaA complex that is not apt for DNA replication. Binds acidic phospholipids. This chain is Chromosomal replication initiator protein DnaA, found in Trichodesmium erythraeum (strain IMS101).